Here is a 483-residue protein sequence, read N- to C-terminus: ATP-dependent protease ATPase subunit HslU (483 aa).

ATP contacts are provided by residues Val-18 and 60–65 (GVGKTE). Composition is skewed to low complexity over residues 136 to 147 (LPGGAPQPAPAQ) and 171 to 181 (AQADASQASPP). The interval 136–212 (LPGGAPQPAP…HGGKLDDREV (77 aa)) is disordered. Positions 182 to 191 (TGTGSAPDSR) are enriched in polar residues. Over residues 192 to 209 (SSTREKLRTLWHGGKLDD) the composition is skewed to basic and acidic residues. Residues Asp-296, Glu-361, and Arg-433 each contribute to the ATP site.

It belongs to the ClpX chaperone family. HslU subfamily. As to quaternary structure, a double ring-shaped homohexamer of HslV is capped on each side by a ring-shaped HslU homohexamer. The assembly of the HslU/HslV complex is dependent on binding of ATP.

It is found in the cytoplasm. Functionally, ATPase subunit of a proteasome-like degradation complex; this subunit has chaperone activity. The binding of ATP and its subsequent hydrolysis by HslU are essential for unfolding of protein substrates subsequently hydrolyzed by HslV. HslU recognizes the N-terminal part of its protein substrates and unfolds these before they are guided to HslV for hydrolysis. This Nitratidesulfovibrio vulgaris (strain DSM 19637 / Miyazaki F) (Desulfovibrio vulgaris) protein is ATP-dependent protease ATPase subunit HslU.